The primary structure comprises 258 residues: Small ribosomal subunit protein mS40 (258 aa).

The N-terminal 35 residues, 1–35 (MAASVLNTVLRRLPMLSLFRGSHRVQVPLQTLCTK), are a transit peptide targeting the mitochondrion. Residues serine 38 and serine 49 each carry the phosphoserine modification. The interval 214 to 258 (SRLRRLYQGHLQEESGPPPESMPKMPPRTPAEASSTGQTGPQSAL) is disordered. Over residues 229–242 (GPPPESMPKMPPRT) the composition is skewed to pro residues. Polar residues predominate over residues 245 to 258 (EASSTGQTGPQSAL).

The protein belongs to the bacterial ribosomal protein bS18 family. Mitochondrion-specific ribosomal protein mS40 subfamily. In terms of assembly, component of the mitochondrial small ribosomal subunit (mt-SSU). Mature mammalian 55S mitochondrial ribosomes consist of a small (28S) and a large (39S) subunit. The 28S small subunit contains a 12S ribosomal RNA (12S mt-rRNA) and 30 different proteins. The 39S large subunit contains a 16S rRNA (16S mt-rRNA), a copy of mitochondrial valine transfer RNA (mt-tRNA(Val)), which plays an integral structural role, and 52 different proteins. mS40 has a zinc binding site.

It localises to the mitochondrion. This is Small ribosomal subunit protein mS40 (MRPS18B) from Homo sapiens (Human).